Here is a 380-residue protein sequence, read N- to C-terminus: Chaperone protein DnaJ (380 aa).

In terms of domain architecture, J spans 5–70 (DFYETLGVSK…QKRAAYDRFG (66 aa)). The CR-type zinc-finger motif lies at 141 to 219 (GKTAQIRVPT…CHGQGRVTEE (79 aa)). Zn(2+) is bound by residues Cys-154, Cys-157, Cys-171, Cys-174, Cys-193, Cys-196, Cys-207, and Cys-210. CXXCXGXG motif repeat units lie at residues 154 to 161 (CEVCSGSG), 171 to 178 (CATCQGSG), 193 to 200 (CPTCQGRG), and 207 to 214 (CGKCHGQG).

It belongs to the DnaJ family. As to quaternary structure, homodimer. Requires Zn(2+) as cofactor.

The protein localises to the cytoplasm. Participates actively in the response to hyperosmotic and heat shock by preventing the aggregation of stress-denatured proteins and by disaggregating proteins, also in an autonomous, DnaK-independent fashion. Unfolded proteins bind initially to DnaJ; upon interaction with the DnaJ-bound protein, DnaK hydrolyzes its bound ATP, resulting in the formation of a stable complex. GrpE releases ADP from DnaK; ATP binding to DnaK triggers the release of the substrate protein, thus completing the reaction cycle. Several rounds of ATP-dependent interactions between DnaJ, DnaK and GrpE are required for fully efficient folding. Also involved, together with DnaK and GrpE, in the DNA replication of plasmids through activation of initiation proteins. The chain is Chaperone protein DnaJ from Allorhizobium ampelinum (strain ATCC BAA-846 / DSM 112012 / S4) (Agrobacterium vitis (strain S4)).